Reading from the N-terminus, the 842-residue chain is Microcephalin (842 aa).

The region spanning 1–93 (MAAPILKDVV…AHIDESLFPA (93 aa)) is the BRCT 1 domain. Residues Ser-279, Ser-287, Ser-296, and Ser-333 each carry the phosphoserine modification. Residue Thr-335 is modified to Phosphothreonine. Residues 346–359 (HSRPRSSSVKRKRV) show a composition bias toward basic residues. Disordered stretches follow at residues 346–375 (HSRPRSSSVKRKRVSYGFHSPPKEKCKRKR), 418–443 (PDNLKERNSENLPPKSQLPSNPAQFS), and 563–624 (VGLK…PTRR). Composition is skewed to polar residues over residues 434–443 (QLPSNPAQFS) and 566–582 (KSTQDKGTTSKISNSSE). A compositionally biased stretch (basic and acidic residues) spans 586 to 608 (PSEHEPRSVVDCNVERSAEEKEN). BRCT domains are found at residues 647–737 (SGKG…PFEL) and 758–840 (YRGT…NYLL).

As to quaternary structure, interacts with CDC27 and maybe other components of the APC/C complex. Interacts with histone variant H2AX under DNA damage conditions.

The protein resides in the cytoplasm. Its subcellular location is the cytoskeleton. The protein localises to the microtubule organizing center. It localises to the centrosome. Functionally, implicated in chromosome condensation and DNA damage induced cellular responses. May play a role in neurogenesis and regulation of the size of the cerebral cortex. The protein is Microcephalin of Macaca fascicularis (Crab-eating macaque).